The chain runs to 312 residues: Ribosomal protein L11 methyltransferase (312 aa).

Residues threonine 160, glycine 181, aspartate 203, and asparagine 246 each contribute to the S-adenosyl-L-methionine site.

Belongs to the methyltransferase superfamily. PrmA family.

The protein resides in the cytoplasm. The catalysed reaction is L-lysyl-[protein] + 3 S-adenosyl-L-methionine = N(6),N(6),N(6)-trimethyl-L-lysyl-[protein] + 3 S-adenosyl-L-homocysteine + 3 H(+). In terms of biological role, methylates ribosomal protein L11. The sequence is that of Ribosomal protein L11 methyltransferase from Staphylococcus haemolyticus (strain JCSC1435).